A 92-amino-acid chain; its full sequence is DNA-directed RNA polymerase subunit Rpo11 (92 aa).

It belongs to the archaeal Rpo11/eukaryotic RPB11/RPC19 RNA polymerase subunit family. As to quaternary structure, part of the RNA polymerase complex.

Its subcellular location is the cytoplasm. It carries out the reaction RNA(n) + a ribonucleoside 5'-triphosphate = RNA(n+1) + diphosphate. In terms of biological role, DNA-dependent RNA polymerase (RNAP) catalyzes the transcription of DNA into RNA using the four ribonucleoside triphosphates as substrates. The chain is DNA-directed RNA polymerase subunit Rpo11 from Saccharolobus islandicus (strain Y.N.15.51 / Yellowstone #2) (Sulfolobus islandicus).